The chain runs to 250 residues: Acetylglutamate kinase (250 aa).

Substrate-binding positions include 41-42, arginine 63, and asparagine 156; that span reads GG.

The protein belongs to the acetylglutamate kinase family. ArgB subfamily.

It localises to the cytoplasm. It catalyses the reaction N-acetyl-L-glutamate + ATP = N-acetyl-L-glutamyl 5-phosphate + ADP. Its pathway is amino-acid biosynthesis; L-arginine biosynthesis; N(2)-acetyl-L-ornithine from L-glutamate: step 2/4. Its function is as follows. Catalyzes the ATP-dependent phosphorylation of N-acetyl-L-glutamate. The chain is Acetylglutamate kinase from Listeria monocytogenes serovar 1/2a (strain ATCC BAA-679 / EGD-e).